Here is a 125-residue protein sequence, read N- to C-terminus: EGSGGSGSSGNFTTGSNVHMSSVTNTSNAGTGGTGTNTGTNTGTGTGTGTGTGTGTGTGTGTGTGTGTGTGTGTGTGKGAGAGTGTATNETAGPGTTTTTTTRSTTTAATAASPPVTLTESLLNK.

The tract at residues 1-125 (EGSGGSGSSG…VTLTESLLNK (125 aa)) is disordered. 3 consecutive repeat copies span residues 30-31 (GT), 33-34 (GT), and 35-36 (GT). Over residues 30-84 (GTGGTGTNTGTNTGTGTGTGTGTGTGTGTGTGTGTGTGTGTGTGTGTGKGAGAGT) the composition is skewed to gly residues. The interval 30–86 (GTGGTGTNTGTNTGTGTGTGTGTGTGTGTGTGTGTGTGTGTGTGTGTGKGAGAGTGT) is 28 X 2 AA approximate tandem repeats of G-[TA]. Residues 37–38 (NT) form a 4; approximate repeat. Copy 5 of the repeat occupies 39–40 (GT). The stretch at 41–42 (NT) is one 6; approximate repeat. 17 consecutive repeat copies span residues 43–44 (GT), 45–46 (GT), 47–48 (GT), 49–50 (GT), 51–52 (GT), 53–54 (GT), 55–56 (GT), 57–58 (GT), 59–60 (GT), 61–62 (GT), 63–64 (GT), 65–66 (GT), 67–68 (GT), 69–70 (GT), 71–72 (GT), 73–74 (GT), and 75–76 (GT). A 24; approximate repeat occupies 77-78 (GK). 4 tandem repeats follow at residues 79–80 (GA), 81–82 (GA), 83–84 (GT), and 85–86 (GT). A compositionally biased stretch (low complexity) spans 85–112 (GTATNETAGPGTTTTTTTRSTTTAATAA). Positions 116-125 (VTLTESLLNK) are enriched in polar residues.

Forms a heterodimer with timeless (TIM); the complex then translocates into the nucleus. In terms of processing, phosphorylated with a circadian rhythmicity, probably by the double-time protein (dbt). Phosphorylation could be implicated in the stability of per monomer and in the formation of heterodimer per-tim.

The protein localises to the nucleus. The protein resides in the cytoplasm. Its subcellular location is the perinuclear region. Essential for biological clock functions. Determines the period length of circadian and ultradian rhythms; an increase in PER dosage leads to shortened circadian rhythms and a decrease leads to lengthened circadian rhythms. Essential for the circadian rhythmicity of locomotor activity, eclosion behavior, and for the rhythmic component of the male courtship song that originates in the thoracic nervous system. The biological cycle depends on the rhythmic formation and nuclear localization of the TIM-PER complex. Light induces the degradation of TIM, which promotes elimination of PER. Nuclear activity of the heterodimer coordinatively regulates PER and TIM transcription through a negative feedback loop. Behaves as a negative element in circadian transcriptional loop. Does not appear to bind DNA, suggesting indirect transcriptional inhibition. The polypeptide is Period circadian protein (per) (Drosophila ananassae (Fruit fly)).